A 129-amino-acid chain; its full sequence is Small ribosomal subunit protein uS11c (129 aa).

The protein belongs to the universal ribosomal protein uS11 family. As to quaternary structure, part of the 30S ribosomal subunit.

It is found in the plastid. It localises to the chloroplast. This Pleurastrum terricola (Filamentous green alga) protein is Small ribosomal subunit protein uS11c.